We begin with the raw amino-acid sequence, 723 residues long: Fatty acid oxidation complex subunit alpha (723 aa).

The interval 1–189 (MIYQANTLQV…KVGLLDAIVE (189 aa)) is enoyl-CoA hydratase/isomerase. Aspartate 296 serves as a coordination point for substrate. The segment at 311-723 (NKATERAAVL…FYDGQQASSL (413 aa)) is 3-hydroxyacyl-CoA dehydrogenase. Residues methionine 325, aspartate 344, 401 to 403 (VVE), lysine 408, and serine 430 contribute to the NAD(+) site. Residue histidine 451 is the For 3-hydroxyacyl-CoA dehydrogenase activity of the active site. Asparagine 454 serves as a coordination point for NAD(+). Asparagine 501 and tyrosine 661 together coordinate substrate.

In the N-terminal section; belongs to the enoyl-CoA hydratase/isomerase family. The protein in the C-terminal section; belongs to the 3-hydroxyacyl-CoA dehydrogenase family. In terms of assembly, heterotetramer of two alpha chains (FadB) and two beta chains (FadA).

The catalysed reaction is a (3S)-3-hydroxyacyl-CoA + NAD(+) = a 3-oxoacyl-CoA + NADH + H(+). The enzyme catalyses a (3S)-3-hydroxyacyl-CoA = a (2E)-enoyl-CoA + H2O. It carries out the reaction a 4-saturated-(3S)-3-hydroxyacyl-CoA = a (3E)-enoyl-CoA + H2O. It catalyses the reaction (3S)-3-hydroxybutanoyl-CoA = (3R)-3-hydroxybutanoyl-CoA. The catalysed reaction is a (3Z)-enoyl-CoA = a 4-saturated (2E)-enoyl-CoA. The enzyme catalyses a (3E)-enoyl-CoA = a 4-saturated (2E)-enoyl-CoA. It functions in the pathway lipid metabolism; fatty acid beta-oxidation. Its function is as follows. Involved in the aerobic and anaerobic degradation of long-chain fatty acids via beta-oxidation cycle. Catalyzes the formation of 3-oxoacyl-CoA from enoyl-CoA via L-3-hydroxyacyl-CoA. It can also use D-3-hydroxyacyl-CoA and cis-3-enoyl-CoA as substrate. The chain is Fatty acid oxidation complex subunit alpha from Vibrio atlanticus (strain LGP32) (Vibrio splendidus (strain Mel32)).